The chain runs to 381 residues: Sulfate adenylyltransferase (381 aa).

Belongs to the sulfate adenylyltransferase family.

It carries out the reaction sulfate + ATP + H(+) = adenosine 5'-phosphosulfate + diphosphate. Its pathway is sulfur metabolism; hydrogen sulfide biosynthesis; sulfite from sulfate: step 1/3. The polypeptide is Sulfate adenylyltransferase (Carboxydothermus hydrogenoformans (strain ATCC BAA-161 / DSM 6008 / Z-2901)).